A 149-amino-acid polypeptide reads, in one-letter code: MKLFIILATATLLIAATQATYPRDEGFDLGETQMSSKCMRQVKMNEPHLKKCNRYIAMDILDDKYAEALSRVEGEGCKSEESCMRGCCVAMKEMDDECVCEWMKMMVENQKGRIGERLIKEGVRDLKELPSKCGLSELECGSRGNRYFV.

The signal sequence occupies residues 1–22 (MKLFIILATATLLIAATQATYP). Disulfide bonds link Cys38/Cys98, Cys52/Cys87, Cys88/Cys133, and Cys100/Cys140. The igE-binding stretch occupies residues 121–128 (EGVRDLKE).

The protein belongs to the 2S seed storage albumins family. As to expression, expressed in seeds (at protein level).

Seed storage protein. This is 2S seed storage albumin protein from Fagopyrum esculentum (Common buckwheat).